Consider the following 689-residue polypeptide: Protein SDA1 homolog (689 aa).

3 disordered regions span residues 227 to 260, 485 to 512, and 623 to 689; these read DEKKDSDSESEDEGPTARDLMVRYSTGKKNTKNK, EQEKKEEPEEDDGWESASLSDDDEDGEW, and TDRK…RLMK. The stretch at 258–319 forms a coiled coil; the sequence is KNKKKLDKAM…RFEVKLMHMD (62 aa). The span at 492-512 shows a compositional bias: acidic residues; that stretch reads PEEDDGWESASLSDDDEDGEW. The segment covering 670 to 681 has biased composition (basic and acidic residues); it reads RDKQIALRDSLL.

This sequence belongs to the SDA1 family.

The protein resides in the nucleus. It is found in the nucleolus. Required for 60S pre-ribosomal subunits export to the cytoplasm. In Xenopus laevis (African clawed frog), this protein is Protein SDA1 homolog (sdad1).